The sequence spans 255 residues: Electron transfer flavoprotein subunit beta (255 aa).

Ala2 bears the N-acetylalanine mark. AMP contacts are provided by residues Ala9, 39 to 42 (NPFC), Cys66, and 123 to 134 (GKQAIDDDCNQT). Residues 183 to 205 (ADLRLNEPRYATLPNIMKAKKKK) form a recognition loop region. Lys200 carries the N6,N6,N6-trimethyllysine; by ETFBKMT; alternate modification. Lys200 is modified (N6-acetyllysine; alternate). Lys200 carries the post-translational modification N6-methyllysine; alternate. Lys203 bears the N6,N6,N6-trimethyllysine; by ETFBKMT mark. At Lys210 the chain carries N6-acetyllysine; alternate. Lys210 is modified (N6-succinyllysine; alternate). Residues Ser223 and Ser226 each carry the phosphoserine modification. Position 238 is an N6-acetyllysine (Lys238). Lys248 bears the N6-acetyllysine; alternate mark. The residue at position 248 (Lys248) is an N6-succinyllysine; alternate.

This sequence belongs to the ETF beta-subunit/FixA family. Heterodimer composed of ETFA and ETFB. Identified in a complex that contains ETFA, ETFB and ETFRF1. Interacts with ACADM. Post-translationally, methylated. Trimethylation at Lys-200 and Lys-203 may negatively regulate the activity in electron transfer from acyl-CoA dehydrogenases.

It localises to the mitochondrion matrix. Heterodimeric electron transfer flavoprotein that accepts electrons from several mitochondrial dehydrogenases, including acyl-CoA dehydrogenases, glutaryl-CoA and sarcosine dehydrogenase. It transfers the electrons to the main mitochondrial respiratory chain via ETF-ubiquinone oxidoreductase. Required for normal mitochondrial fatty acid oxidation and normal amino acid metabolism. ETFB binds an AMP molecule that probably has a purely structural role. In Bos taurus (Bovine), this protein is Electron transfer flavoprotein subunit beta.